Consider the following 69-residue polypeptide: DNA-directed RNA polymerase subunit epsilon (69 aa).

This sequence belongs to the RNA polymerase subunit epsilon family. RNAP is composed of a core of 2 alpha, a beta and a beta' subunit. The core is associated with a delta subunit, and at least one of epsilon or omega. When a sigma factor is associated with the core the holoenzyme is formed, which can initiate transcription.

It carries out the reaction RNA(n) + a ribonucleoside 5'-triphosphate = RNA(n+1) + diphosphate. Its function is as follows. A non-essential component of RNA polymerase (RNAP). In Listeria monocytogenes serotype 4b (strain CLIP80459), this protein is DNA-directed RNA polymerase subunit epsilon.